The chain runs to 348 residues: Protein RecA (348 aa).

Glycine 65 to threonine 72 lines the ATP pocket.

The protein belongs to the RecA family.

It localises to the cytoplasm. Functionally, can catalyze the hydrolysis of ATP in the presence of single-stranded DNA, the ATP-dependent uptake of single-stranded DNA by duplex DNA, and the ATP-dependent hybridization of homologous single-stranded DNAs. It interacts with LexA causing its activation and leading to its autocatalytic cleavage. This is Protein RecA from Vibrio anguillarum (Listonella anguillarum).